The following is a 185-amino-acid chain: Ribosome-recycling factor (185 aa).

The segment at 132-152 (RRDANEQLKKMEKDSELTEDD) is disordered.

It belongs to the RRF family.

It is found in the cytoplasm. Responsible for the release of ribosomes from messenger RNA at the termination of protein biosynthesis. May increase the efficiency of translation by recycling ribosomes from one round of translation to another. The polypeptide is Ribosome-recycling factor (Alkaliphilus metalliredigens (strain QYMF)).